The primary structure comprises 502 residues: Putative ZDHHC-type palmitoyltransferase 3 (502 aa).

The disordered stretch occupies residues M1–L80. The segment covering K10 to E30 has biased composition (basic and acidic residues). The span at N31 to Y52 shows a compositional bias: low complexity. N-linked (GlcNAc...) asparagine glycosylation occurs at N58. The segment covering D59–T73 has biased composition (acidic residues). The next 2 helical transmembrane spans lie at F104–V124 and L134–Y154. The segment at I200 to Q281 is disordered. A compositionally biased stretch (low complexity) spans D203–F212. Residues S213–E222 show a composition bias toward acidic residues. A compositionally biased stretch (low complexity) spans N248–N280. N-linked (GlcNAc...) asparagine glycans are attached at residues N252 and N280. A DHHC domain is found at K299 to T349. C329 serves as the catalytic S-palmitoyl cysteine intermediate. A helical membrane pass occupies residues F344 to V364. N-linked (GlcNAc...) asparagine glycans are attached at residues N371, N388, and N393. A helical membrane pass occupies residues G419–V439. N-linked (GlcNAc...) asparagine glycans are attached at residues N449, N483, and N494.

The protein belongs to the DHHC palmitoyltransferase family.

The protein localises to the membrane. It catalyses the reaction L-cysteinyl-[protein] + hexadecanoyl-CoA = S-hexadecanoyl-L-cysteinyl-[protein] + CoA. This is Putative ZDHHC-type palmitoyltransferase 3 from Dictyostelium discoideum (Social amoeba).